The primary structure comprises 331 residues: Inositol 2-dehydrogenase (331 aa).

Belongs to the Gfo/Idh/MocA family. As to quaternary structure, homotetramer.

The enzyme catalyses myo-inositol + NAD(+) = scyllo-inosose + NADH + H(+). Involved in the oxidation of myo-inositol (MI) to 2-keto-myo-inositol (2KMI or 2-inosose). In Renibacterium salmoninarum (strain ATCC 33209 / DSM 20767 / JCM 11484 / NBRC 15589 / NCIMB 2235), this protein is Inositol 2-dehydrogenase.